A 557-amino-acid chain; its full sequence is Selenoprotein N (557 aa).

Residues 1-24 (MGQARPAARRPHSPDPGAQPAPPR) are disordered. A signal peptide spans 1-42 (MGQARPAARRPHSPDPGAQPAPPRRRARALALLGALLAAAAA). Residues 67–102 (VLGTDGLFLFSSLDTDQDMYISPEEFKPIAEKLTGS) form the EF-hand domain. Residue Asn156 is glycosylated (N-linked (GlcNAc...) asparagine). Position 428 (Sec428) is a non-standard amino acid, selenocysteine. 2 N-linked (GlcNAc...) asparagine glycosylation sites follow: Asn449 and Asn497.

As to quaternary structure, interacts with RYR1, RYR2 and RYR3. Post-translationally, N-glycosylated.

It is found in the endoplasmic reticulum membrane. Functionally, plays an important role in cell protection against oxidative stress and in the regulation of redox-related calcium homeostasis. Regulates the calcium level of the ER by protecting the calcium pump ATP2A2 against the oxidoreductase ERO1A-mediated oxidative damage. Within the ER, ERO1A activity increases the concentration of H(2)O(2), which attacks the luminal thiols in ATP2A2 and thus leads to cysteinyl sulfenic acid formation (-SOH) and SEPN1 reduces the SOH back to free thiol (-SH), thus restoring ATP2A2 activity. Acts as a modulator of ryanodine receptor (RyR) activity: protects RyR from oxidation due to increased oxidative stress, or directly controls the RyR redox state, regulating the RyR-mediated calcium mobilization required for normal muscle development and differentiation. Essential for muscle regeneration and satellite cell maintenance in skeletal muscle. The chain is Selenoprotein N from Mus musculus (Mouse).